A 518-amino-acid chain; its full sequence is Sensor protein kinase HptS (518 aa).

A run of 2 helical transmembrane segments spans residues 20-40 (IFPVFLVIIIGLVSFYAIYIW) and 222-242 (GITLLIVMAVVLVLLVIFGFI). The Histidine kinase domain occupies 297–513 (EQLIHSIEHT…LICYKIPLSR (217 aa)). His-325 carries the phosphohistidine; by autocatalysis modification.

Autophosphorylated.

It localises to the cell membrane. It carries out the reaction ATP + protein L-histidine = ADP + protein N-phospho-L-histidine.. Its function is as follows. Member of the two-component regulatory system HptS/HptR that regulates genes involved in hexose phosphate transport system in response to changes in extracellular phosphate sources. May act as a sensor protein kinase which is autophosphorylated at a histidine residue and transfers its phosphate group to the conserved aspartic acid residue in the regulatory domain of HptS. In turn, HptS antagonizes CcpA-dependent transcription of a subset of CcpA-regulated genes involved in antibiotic susceptibility. In Staphylococcus aureus (strain Mu50 / ATCC 700699), this protein is Sensor protein kinase HptS (hptS).